The sequence spans 248 residues: Delayed minus-nitrogen induction protein 2 (248 aa).

A run of 4 helical transmembrane segments spans residues Ile-26–Cys-46, Val-110–Ile-130, Ile-144–Ala-164, and Gly-186–Ile-206.

This sequence belongs to the SUR7 family.

The protein localises to the membrane. In Schizosaccharomyces pombe (strain 972 / ATCC 24843) (Fission yeast), this protein is Delayed minus-nitrogen induction protein 2 (dni2).